Reading from the N-terminus, the 318-residue chain is L-malyl-CoA/beta-methylmalyl-CoA lyase (318 aa).

Substrate is bound by residues Phe-19, Arg-24, Lys-30, and Arg-76. Mg(2+) contacts are provided by Glu-141 and Asp-168. Residues 167-168 and 251-252 contribute to the substrate site; these read AD and IH.

Belongs to the HpcH/HpaI aldolase family. Homohexamer. Dimer of trimers. Mg(2+) is required as a cofactor. The cofactor is Mn(2+).

It carries out the reaction (S)-malyl-CoA = glyoxylate + acetyl-CoA. It catalyses the reaction (2R,3S)-beta-methylmalyl-CoA = propanoyl-CoA + glyoxylate. With respect to regulation, in vitro inhibited by EDTA. In terms of biological role, involved in the ethylmalonyl-CoA pathway for acetate assimilation. Catalyzes the reversible condensation of glyoxylate and acetyl-CoA to L-malyl-CoA and the reversible condensation of glyoxylate and propionyl-CoA to beta-methylmalyl-CoA. The chain is L-malyl-CoA/beta-methylmalyl-CoA lyase from Rhodobacter capsulatus (Rhodopseudomonas capsulata).